The sequence spans 314 residues: Epithelial cell adhesion molecule (314 aa).

A signal peptide spans Met1–Ala23. The Extracellular portion of the chain corresponds to Gln24 to Gln265. 6 disulfide bridges follow: Cys27–Cys46, Cys29–Cys59, Cys38–Cys48, Cys66–Cys99, Cys110–Cys116, and Cys118–Cys135. The N-linked (GlcNAc...) asparagine glycan is linked to Asn37. In terms of domain architecture, Thyroglobulin type-1 spans Ala63–Cys135. Asn111 is a glycosylation site (N-linked (GlcNAc...) asparagine). Asn198 is a glycosylation site (N-linked (GlcNAc...) asparagine). A helical transmembrane segment spans residues Ala266–Val288. Over Ser289–Ala314 the chain is Cytoplasmic.

The protein belongs to the EPCAM family. In terms of assembly, monomer. Interacts with phosphorylated CLDN7. Glycosylation at Asn-198 is crucial for protein stability.

The protein localises to the lateral cell membrane. Its subcellular location is the cell junction. It localises to the tight junction. Its function is as follows. May act as a physical homophilic interaction molecule between intestinal epithelial cells (IECs) and intraepithelial lymphocytes (IELs) at the mucosal epithelium for providing immunological barrier as a first line of defense against mucosal infection. Plays a role in embryonic stem cells proliferation and differentiation. Up-regulates the expression of FABP5, MYC and cyclins A and E. The sequence is that of Epithelial cell adhesion molecule (TACSTD1) from Sus scrofa (Pig).